Here is a 273-residue protein sequence, read N- to C-terminus: Outer surface protein A (273 aa).

The first 16 residues, Met1–Ala16, serve as a signal peptide directing secretion. Cys17 carries the N-palmitoyl cysteine lipid modification. Cys17 is lipidated: S-diacylglycerol cysteine.

It belongs to the OspA lipoprotein family.

The protein resides in the cell outer membrane. Its subcellular location is the cell surface. Induces host (human and mouse) cytokine release by monocyte cell lines via TLR2 and CD14; nonlipidated protein does not stimulate host cells. In Borreliella burgdorferi (strain ATCC 35210 / DSM 4680 / CIP 102532 / B31) (Borrelia burgdorferi), this protein is Outer surface protein A.